Consider the following 424-residue polypeptide: Phosphoribosylamine--glycine ligase (424 aa).

One can recognise an ATP-grasp domain in the interval 107-313 (KTFMKKYGIP…FLETLLNFYE (207 aa)). An ATP-binding site is contributed by 133-194 (VEKVGAPIVV…EEFLEGEEAS (62 aa)). Residues E283 and N285 each coordinate Mg(2+).

Belongs to the GARS family. Mg(2+) is required as a cofactor. Mn(2+) serves as cofactor.

The enzyme catalyses 5-phospho-beta-D-ribosylamine + glycine + ATP = N(1)-(5-phospho-beta-D-ribosyl)glycinamide + ADP + phosphate + H(+). It participates in purine metabolism; IMP biosynthesis via de novo pathway; N(1)-(5-phospho-D-ribosyl)glycinamide from 5-phospho-alpha-D-ribose 1-diphosphate: step 2/2. The protein is Phosphoribosylamine--glycine ligase of Aquifex aeolicus (strain VF5).